A 325-amino-acid chain; its full sequence is Glutarate 2-hydroxylase (325 aa).

3 residues coordinate Fe cation: His160, Asp162, and His292.

The protein belongs to the glutarate hydroxylase family. As to quaternary structure, homotetramer. Requires Fe(2+) as cofactor.

The enzyme catalyses glutarate + 2-oxoglutarate + O2 = (S)-2-hydroxyglutarate + succinate + CO2. The protein operates within amino-acid degradation. Functionally, acts as an alpha-ketoglutarate-dependent dioxygenase catalyzing hydroxylation of glutarate (GA) to L-2-hydroxyglutarate (L2HG). Functions in a L-lysine degradation pathway that proceeds via cadaverine, glutarate and L-2-hydroxyglutarate. This Citrobacter koseri (strain ATCC BAA-895 / CDC 4225-83 / SGSC4696) protein is Glutarate 2-hydroxylase.